A 340-amino-acid polypeptide reads, in one-letter code: Uroporphyrinogen decarboxylase (340 aa).

Residues 21–25 (RQAGR), D71, Y148, S203, and H316 each bind substrate.

Belongs to the uroporphyrinogen decarboxylase family. In terms of assembly, homodimer.

It is found in the cytoplasm. It carries out the reaction uroporphyrinogen III + 4 H(+) = coproporphyrinogen III + 4 CO2. It functions in the pathway porphyrin-containing compound metabolism; protoporphyrin-IX biosynthesis; coproporphyrinogen-III from 5-aminolevulinate: step 4/4. Its function is as follows. Catalyzes the decarboxylation of four acetate groups of uroporphyrinogen-III to yield coproporphyrinogen-III. The chain is Uroporphyrinogen decarboxylase from Campylobacter jejuni subsp. jejuni serotype O:23/36 (strain 81-176).